The chain runs to 398 residues: Lysophosphatidylserine lipase ABHD12 (398 aa).

A compositionally biased stretch (basic and acidic residues) spans 1–16 (MRKRTEPVALEHERRT). A disordered region spans residues 1 to 24 (MRKRTEPVALEHERRTASGSPSAG). Over 1 to 74 (MRKRTEPVAL…RKGLCFRLRK (74 aa)) the chain is Cytoplasmic. The helical transmembrane segment at 75 to 95 (ILFFVLGLYVAIPFLIKLCPG) threads the bilayer. At 96–398 (IQAKLIFLNF…LGKSEPGRQH (303 aa)) the chain is on the extracellular side. N-linked (GlcNAc...) asparagine glycosylation is present at Asn-123. Ser-246 (nucleophile) is an active-site residue. Active-site charge relay system residues include Asp-333 and His-372.

The protein belongs to the serine esterase family.

It localises to the endoplasmic reticulum membrane. The catalysed reaction is 1-(9Z-octadecenoyl)-sn-glycero-3-phospho-L-serine + H2O = sn-glycero-3-phospho-L-serine + (9Z)-octadecenoate + H(+). It catalyses the reaction 1-(9Z-octadecenoyl)-sn-glycero-3-phospho-(1'-sn-glycerol) + H2O = sn-glycero-3-phospho-(1'-sn-glycerol) + (9Z)-octadecenoate + H(+). It carries out the reaction 1-(9Z-octadecenoyl)-sn-glycero-3-phospho-(1D-myo-inositol) + H2O = sn-glycero-3-phospho-1D-myo-inositol + (9Z)-octadecenoate + H(+). The enzyme catalyses 1-(9Z-octadecenoyl)-sn-glycero-3-phosphoethanolamine + H2O = sn-glycero-3-phosphoethanolamine + (9Z)-octadecenoate + H(+). The catalysed reaction is 1-(9Z-octadecenoyl)-sn-glycero-3-phosphocholine + H2O = 1-(9Z-octadecenoyl)-sn-glycerol + phosphocholine + H(+). It catalyses the reaction 2-(9Z-octadecenoyl)-glycerol + H2O = glycerol + (9Z)-octadecenoate + H(+). It carries out the reaction 1-hexadecanoyl-sn-glycero-3-phospho-L-serine + H2O = sn-glycero-3-phospho-L-serine + hexadecanoate + H(+). The enzyme catalyses 2-(5Z,8Z,11Z,14Z-eicosatetraenoyl)-glycerol + H2O = glycerol + (5Z,8Z,11Z,14Z)-eicosatetraenoate + H(+). The catalysed reaction is Hydrolyzes glycerol monoesters of long-chain fatty acids.. It catalyses the reaction 1-decanoylglycerol + H2O = decanoate + glycerol + H(+). It carries out the reaction 1-dodecanoylglycerol + H2O = dodecanoate + glycerol + H(+). The enzyme catalyses 1-tetradecanoylglycerol + H2O = tetradecanoate + glycerol + H(+). The catalysed reaction is 2-hexadecanoylglycerol + H2O = glycerol + hexadecanoate + H(+). It catalyses the reaction 1-(9Z-octadecenoyl)-glycerol + H2O = glycerol + (9Z)-octadecenoate + H(+). It carries out the reaction 2-(9Z,12Z-octadecadienoyl)-glycerol + H2O = (9Z,12Z)-octadecadienoate + glycerol + H(+). The enzyme catalyses 1-(5Z,8Z,11Z,14Z-eicosatetraenoyl)-glycerol + H2O = glycerol + (5Z,8Z,11Z,14Z)-eicosatetraenoate + H(+). The catalysed reaction is 1-(9Z,12Z-octadecadienoyl)-glycerol + H2O = (9Z,12Z)-octadecadienoate + glycerol + H(+). It catalyses the reaction 1-hexadecanoylglycerol + H2O = glycerol + hexadecanoate + H(+). It carries out the reaction 1-octadecanoylglycerol + H2O = octadecanoate + glycerol + H(+). The enzyme catalyses 1-octadecanoyl-2-(9,10-epoxyoctadecanoyl)-sn-glycero-3-phospho-L-serine + H2O = 9,10-epoxyoctadecanoate + 1-octadecanoyl-sn-glycero-3-phosphoserine + H(+). The catalysed reaction is 1-octadecanoyl-2-(10-hydroxyoctadecanoyl)-sn-glycero-3-phospho-L-serine + H2O = 1-octadecanoyl-sn-glycero-3-phosphoserine + 10-hydroxyoctadecanoate + H(+). It catalyses the reaction 1-hexadecanoyl-2-(10-hydroxyoctadecanoyl)-sn-glycero-3-phospho-L-serine + H2O = 10-hydroxyoctadecanoate + 1-hexadecanoyl-sn-glycero-3-phospho-L-serine + H(+). Lysophosphatidylserine (LPS) lipase that mediates the hydrolysis of lysophosphatidylserine, a class of signaling lipids that regulates immunological and neurological processes. Represents a major lysophosphatidylserine lipase in the brain, thereby playing a key role in the central nervous system. Also able to hydrolyze oxidized phosphatidylserine; oxidized phosphatidylserine is produced in response to severe inflammatory stress and constitutes a proapoptotic 'eat me' signal. Also has monoacylglycerol (MAG) lipase activity: hydrolyzes 2-arachidonoylglycerol (2-AG), thereby acting as a regulator of endocannabinoid signaling pathways. Has a strong preference for very-long-chain lipid substrates; substrate specificity is likely due to improved catalysis and not improved substrate binding. The protein is Lysophosphatidylserine lipase ABHD12 of Bos taurus (Bovine).